Here is a 187-residue protein sequence, read N- to C-terminus: Elongation factor P (187 aa).

It belongs to the elongation factor P family.

The protein localises to the cytoplasm. Its pathway is protein biosynthesis; polypeptide chain elongation. Its function is as follows. Involved in peptide bond synthesis. Stimulates efficient translation and peptide-bond synthesis on native or reconstituted 70S ribosomes in vitro. Probably functions indirectly by altering the affinity of the ribosome for aminoacyl-tRNA, thus increasing their reactivity as acceptors for peptidyl transferase. This is Elongation factor P from Desulfatibacillum aliphaticivorans.